Consider the following 355-residue polypeptide: Histidinol-phosphate aminotransferase 2 (355 aa).

Position 213 is an N6-(pyridoxal phosphate)lysine (K213).

The protein belongs to the class-II pyridoxal-phosphate-dependent aminotransferase family. Histidinol-phosphate aminotransferase subfamily. Homodimer. It depends on pyridoxal 5'-phosphate as a cofactor.

The enzyme catalyses L-histidinol phosphate + 2-oxoglutarate = 3-(imidazol-4-yl)-2-oxopropyl phosphate + L-glutamate. It functions in the pathway amino-acid biosynthesis; L-histidine biosynthesis; L-histidine from 5-phospho-alpha-D-ribose 1-diphosphate: step 7/9. The sequence is that of Histidinol-phosphate aminotransferase 2 from Burkholderia lata (strain ATCC 17760 / DSM 23089 / LMG 22485 / NCIMB 9086 / R18194 / 383).